A 454-amino-acid polypeptide reads, in one-letter code: Tol-Pal system protein TolB (454 aa).

Positions 1-21 (MSLRPISLMLALLLTSAPALA) are cleaved as a signal peptide.

The protein belongs to the TolB family. The Tol-Pal system is composed of five core proteins: the inner membrane proteins TolA, TolQ and TolR, the periplasmic protein TolB and the outer membrane protein Pal. They form a network linking the inner and outer membranes and the peptidoglycan layer.

The protein localises to the periplasm. In terms of biological role, part of the Tol-Pal system, which plays a role in outer membrane invagination during cell division and is important for maintaining outer membrane integrity. The protein is Tol-Pal system protein TolB of Sphingopyxis alaskensis (strain DSM 13593 / LMG 18877 / RB2256) (Sphingomonas alaskensis).